The following is a 284-amino-acid chain: RNase adapter protein RapZ (284 aa).

ATP is bound at residue 8–15 (GRSGSGKS). Residue 56 to 59 (DVRN) coordinates GTP. Residues 266–284 (RSRGKNVQSRHRTLEKRKS) form an RNA-binding region.

The protein belongs to the RapZ-like family. RapZ subfamily. As to quaternary structure, homotrimer.

Functionally, modulates the synthesis of GlmS, by affecting the processing and stability of the regulatory small RNA GlmZ. When glucosamine-6-phosphate (GlcN6P) concentrations are high in the cell, RapZ binds GlmZ and targets it to cleavage by RNase E. Consequently, GlmZ is inactivated and unable to activate GlmS synthesis. Under low GlcN6P concentrations, RapZ is sequestered and inactivated by an other regulatory small RNA, GlmY, preventing GlmZ degradation and leading to synthesis of GlmS. The sequence is that of RNase adapter protein RapZ from Klebsiella pneumoniae (strain 342).